A 629-amino-acid polypeptide reads, in one-letter code: Extracellular metalloproteinase 10 (629 aa).

Positions 1–19 are cleaved as a signal peptide; the sequence is MHGLLLAAGLLSLPLYTIA. A propeptide spanning residues 20 to 240 is cleaved from the precursor; sequence HTQPSGALSR…VHNVVDYVAH (221 aa). N-linked (GlcNAc...) asparagine glycans are attached at residues asparagine 281 and asparagine 331. Histidine 424 lines the Zn(2+) pocket. Residue glutamate 425 is part of the active site. Histidine 428 is a Zn(2+) binding site. Asparagine 469 and asparagine 617 each carry an N-linked (GlcNAc...) asparagine glycan.

Belongs to the peptidase M36 family. The cofactor is Zn(2+).

It localises to the secreted. Secreted metalloproteinase that allows assimilation of proteinaceous substrates and probably acts as a virulence factor. The protein is Extracellular metalloproteinase 10 (MEP10) of Coccidioides posadasii (strain C735) (Valley fever fungus).